The sequence spans 305 residues: Coiled-coil domain-containing protein 50 (305 aa).

A2 is modified (N-acetylalanine). At S5 the chain carries Phosphoserine. Residues 86–130 are a coiled coil; that stretch reads EIAQEIQEKLTIEAERRRIQEKKDEDIARLLQEKELQEEKRRKKH. Disordered stretches follow at residues 122 to 142 and 218 to 305; these read QEEK…VFGD and KKAK…HNKQ. Composition is skewed to basic and acidic residues over residues 218 to 239 and 247 to 263; these read KKAK…ECKL and KSKE…DRPS. Polar residues predominate over residues 279–305; sequence THFTNQHSTTWHLPKSESSQKGFHNKQ.

In terms of assembly, interacts with RNF126. Phosphorylated on tyrosine residues. Widely expressed.

Its subcellular location is the cytoplasm. Functionally, involved in EGFR signaling. The sequence is that of Coiled-coil domain-containing protein 50 (Ccdc50) from Mus musculus (Mouse).